The following is a 286-amino-acid chain: 4-diphosphocytidyl-2-C-methyl-D-erythritol kinase (286 aa).

Residue Lys10 is part of the active site. 100–110 (PMGSGLGGGSS) lines the ATP pocket. The active site involves Asp142.

The protein belongs to the GHMP kinase family. IspE subfamily. Homodimer.

It carries out the reaction 4-CDP-2-C-methyl-D-erythritol + ATP = 4-CDP-2-C-methyl-D-erythritol 2-phosphate + ADP + H(+). Its pathway is isoprenoid biosynthesis; isopentenyl diphosphate biosynthesis via DXP pathway; isopentenyl diphosphate from 1-deoxy-D-xylulose 5-phosphate: step 3/6. Its function is as follows. Catalyzes the phosphorylation of the position 2 hydroxy group of 4-diphosphocytidyl-2C-methyl-D-erythritol. The polypeptide is 4-diphosphocytidyl-2-C-methyl-D-erythritol kinase (Buchnera aphidicola subsp. Acyrthosiphon pisum (strain APS) (Acyrthosiphon pisum symbiotic bacterium)).